A 148-amino-acid polypeptide reads, in one-letter code: Lysozyme C (148 aa).

The N-terminal stretch at 1–18 (MKALIILGLVLLSVTVQG) is a signal peptide. Residues 19–148 (KIFERCELAR…VSQYVKGCGV (130 aa)) form the C-type lysozyme domain. 4 disulfide bridges follow: cysteine 24–cysteine 146, cysteine 48–cysteine 134, cysteine 83–cysteine 99, and cysteine 95–cysteine 113. Active-site residues include glutamate 53 and aspartate 71.

It belongs to the glycosyl hydrolase 22 family. Monomer.

It is found in the secreted. It carries out the reaction Hydrolysis of (1-&gt;4)-beta-linkages between N-acetylmuramic acid and N-acetyl-D-glucosamine residues in a peptidoglycan and between N-acetyl-D-glucosamine residues in chitodextrins.. Lysozymes have primarily a bacteriolytic function; those in tissues and body fluids are associated with the monocyte-macrophage system and enhance the activity of immunoagents. This is Lysozyme C (LYZ) from Pygathrix nemaeus (Red-shanked douc langur).